Consider the following 215-residue polypeptide: Sec-independent protein translocase protein TatB (215 aa).

Residues Met1–Gly21 form a helical membrane-spanning segment. Disordered regions lie at residues Asp95–Asn119 and Ala138–Ala215. Residues Gln145–Glu157 are compositionally biased toward basic and acidic residues. Positions Ser203 to Ala215 are enriched in basic residues.

This sequence belongs to the TatB family. As to quaternary structure, the Tat system comprises two distinct complexes: a TatABC complex, containing multiple copies of TatA, TatB and TatC subunits, and a separate TatA complex, containing only TatA subunits. Substrates initially bind to the TatABC complex, which probably triggers association of the separate TatA complex to form the active translocon.

It is found in the cell inner membrane. In terms of biological role, part of the twin-arginine translocation (Tat) system that transports large folded proteins containing a characteristic twin-arginine motif in their signal peptide across membranes. Together with TatC, TatB is part of a receptor directly interacting with Tat signal peptides. TatB may form an oligomeric binding site that transiently accommodates folded Tat precursor proteins before their translocation. The protein is Sec-independent protein translocase protein TatB of Rhizobium meliloti (strain 1021) (Ensifer meliloti).